A 349-amino-acid chain; its full sequence is Guanine nucleotide-binding protein-like alpha-10 subunit (349 aa).

The 317-residue stretch at 33 to 349 (EEIRVLIYGQ…LNITYNSVKN (317 aa)) folds into the G-alpha domain. A G1 motif region spans residues 36-49 (RVLIYGQKKVGVTT). Residues 168-176 (DLNFIKLTQ) are G2 motif. Residues 191–200 (IKMIEMGIQT) form a G3 motif region. GTP is bound by residues 195–199 (EMGIQ) and 266–269 (NKKD). Positions 262 to 269 (IVFFNKKD) are G4 motif. Positions 320–325 (NEESEV) are G5 motif.

The protein belongs to the G-alpha family.

In Dictyostelium discoideum (Social amoeba), this protein is Guanine nucleotide-binding protein-like alpha-10 subunit (gpaJ).